The primary structure comprises 89 residues: Elongation factor 1-beta (89 aa).

The protein belongs to the EF-1-beta/EF-1-delta family.

Functionally, promotes the exchange of GDP for GTP in EF-1-alpha/GDP, thus allowing the regeneration of EF-1-alpha/GTP that could then be used to form the ternary complex EF-1-alpha/GTP/AAtRNA. In Methanococcus maripaludis (strain C7 / ATCC BAA-1331), this protein is Elongation factor 1-beta.